The primary structure comprises 85 residues: Neurotoxin beta-KTx 14.3 (85 aa).

Residues 1–20 form the signal peptide; sequence MKQYIFFLALIVLTATFAEA. Residues 21–37 constitute a propeptide that is removed on maturation; the sequence is GKKTEILDKVKKVFSKG. One can recognise a BetaSPN-type CS-alpha/beta domain in the interval 49–85; sequence ELGCPFIEKWCEDHCESKKQVGKCENFDCSCVKLGGK. Intrachain disulfides connect Cys-52-Cys-72, Cys-59-Cys-77, and Cys-63-Cys-79.

It belongs to the long chain scorpion toxin family. Class 2 subfamily. As to expression, expressed by the venom gland.

The protein localises to the secreted. Its function is as follows. Toxin with activity on voltage-gated potassium channels. Moderately and reversibly blocks up to 50% of the activity of Kv7.1/KCNQ1 (tested at 22 uM). 3D-structure modeling of the KCNQ1-toxin complex shows that the toxin interacts with the channel pore domain. Additionally, shows a very weak effect to block voltage-gated potassium channel Kv1.1/KCNA1. Has a very weak effect to block voltage-gated potassium channel Kv1.1/KCNA1. In Lychas mucronatus (Chinese swimming scorpion), this protein is Neurotoxin beta-KTx 14.3.